We begin with the raw amino-acid sequence, 95 residues long: Antitoxin VapB41 (95 aa).

Its function is as follows. Antitoxin component of a type II toxin-antitoxin (TA) system. In Mycobacterium tuberculosis (strain CDC 1551 / Oshkosh), this protein is Antitoxin VapB41 (vapB41).